A 195-amino-acid chain; its full sequence is Flagellar transcriptional regulator FlhC (195 aa).

Zn(2+)-binding residues include C137, C140, C157, and C160. The interval 165–195 is disordered; that stretch reads RAGSARRKTTTRKAVAPTHKTTAASRKAVVA.

The protein belongs to the FlhC family. In terms of assembly, heterohexamer composed of two FlhC and four FlhD subunits. Each FlhC binds a FlhD dimer, forming a heterotrimer, and a hexamer assembles by dimerization of two heterotrimers. It depends on Zn(2+) as a cofactor.

The protein resides in the cytoplasm. Functionally, functions in complex with FlhD as a master transcriptional regulator that regulates transcription of several flagellar and non-flagellar operons by binding to their promoter region. Activates expression of class 2 flagellar genes, including fliA, which is a flagellum-specific sigma factor that turns on the class 3 genes. Also regulates genes whose products function in a variety of physiological pathways. This chain is Flagellar transcriptional regulator FlhC, found in Thauera aminoaromatica.